Consider the following 124-residue polypeptide: Ragulator complex protein LAMTOR3 homolog (124 aa).

It belongs to the LAMTOR3 family. As to quaternary structure, part of the Ragulator complex composed of Lamtor3, Lamtor2, CG14184, CG14812, and Lamtor4.

Functionally, regulator of the TOR pathway, a signaling cascade that promotes cell growth in response to growth factors, energy levels, and amino acids. As part of the Ragulator complex, may activate the TOR signaling cascade in response to amino acids. The polypeptide is Ragulator complex protein LAMTOR3 homolog (Drosophila melanogaster (Fruit fly)).